The chain runs to 158 residues: RING-H2 finger protein ATL66 (158 aa).

A helical transmembrane segment spans residues 33–53; sequence LFFALALFSVVLFFALLTLYI. The segment at 107-149 adopts an RING-type; atypical zinc-finger fold; sequence CCICLGGFEEGEKMKVLPPCSHCYHCECVDRWLKTESSCPLCR.

Belongs to the RING-type zinc finger family. ATL subfamily.

Its subcellular location is the membrane. It carries out the reaction S-ubiquitinyl-[E2 ubiquitin-conjugating enzyme]-L-cysteine + [acceptor protein]-L-lysine = [E2 ubiquitin-conjugating enzyme]-L-cysteine + N(6)-ubiquitinyl-[acceptor protein]-L-lysine.. Its pathway is protein modification; protein ubiquitination. In Arabidopsis thaliana (Mouse-ear cress), this protein is RING-H2 finger protein ATL66 (ATL66).